We begin with the raw amino-acid sequence, 619 residues long: Translation initiation factor IF-2 (619 aa).

Composition is skewed to low complexity over residues 1-18 and 98-111; these read MTLN…TTPK and PPQL…LTKT. Disordered stretches follow at residues 1–24 and 90–113; these read MTLN…KETD and SEPQ…KTKP. The 169-residue stretch at 121 to 289 folds into the tr-type G domain; the sequence is KKSPIVTIMG…ILLVSEIQNL (169 aa). Positions 130 to 137 are G1; that stretch reads GHVDHGKT. GTP is bound at residue 130–137; sequence GHVDHGKT. The tract at residues 155–159 is G2; sequence GITQH. The tract at residues 176–179 is G3; the sequence is DTPG. GTP is bound by residues 176–180 and 230–233; these read DTPGH and NKID. Residues 230-233 form a G4 region; that stretch reads NKID. The interval 266 to 268 is G5; sequence SAL.

The protein belongs to the TRAFAC class translation factor GTPase superfamily. Classic translation factor GTPase family. IF-2 subfamily.

Its subcellular location is the cytoplasm. In terms of biological role, one of the essential components for the initiation of protein synthesis. Protects formylmethionyl-tRNA from spontaneous hydrolysis and promotes its binding to the 30S ribosomal subunits. Also involved in the hydrolysis of GTP during the formation of the 70S ribosomal complex. This Onion yellows phytoplasma (strain OY-M) protein is Translation initiation factor IF-2.